Reading from the N-terminus, the 44-residue chain is Defensin heliomicin (44 aa).

Intrachain disulfides connect Cys7–Cys32, Cys18–Cys40, and Cys22–Cys42.

It is found in the secreted. This peptide has potent anti-fungal activity. Has no activity against Gram-negative and Gram-positive bacteria. This is Defensin heliomicin from Heliothis virescens (Tobacco budworm moth).